Consider the following 844-residue polypeptide: DNA mismatch repair protein MutS (844 aa).

An ATP-binding site is contributed by 602 to 609 (GPNMSGKS).

The protein belongs to the DNA mismatch repair MutS family.

Its function is as follows. This protein is involved in the repair of mismatches in DNA. It is possible that it carries out the mismatch recognition step. This protein has a weak ATPase activity. In Streptococcus pneumoniae (strain Hungary19A-6), this protein is DNA mismatch repair protein MutS.